We begin with the raw amino-acid sequence, 888 residues long: Alanine--tRNA ligase (888 aa).

Zn(2+) is bound by residues histidine 564, histidine 568, cysteine 676, and histidine 680.

The protein belongs to the class-II aminoacyl-tRNA synthetase family. Zn(2+) is required as a cofactor.

It is found in the cytoplasm. The catalysed reaction is tRNA(Ala) + L-alanine + ATP = L-alanyl-tRNA(Ala) + AMP + diphosphate. Its function is as follows. Catalyzes the attachment of alanine to tRNA(Ala) in a two-step reaction: alanine is first activated by ATP to form Ala-AMP and then transferred to the acceptor end of tRNA(Ala). Also edits incorrectly charged Ser-tRNA(Ala) and Gly-tRNA(Ala) via its editing domain. This Bartonella quintana (strain Toulouse) (Rochalimaea quintana) protein is Alanine--tRNA ligase.